Here is a 202-residue protein sequence, read N- to C-terminus: Small ribosomal subunit protein uS4c (202 aa).

Residues 90-154 (MRLDNIIFRL…SQSIITKNLN (65 aa)) enclose the S4 RNA-binding domain.

It belongs to the universal ribosomal protein uS4 family. In terms of assembly, part of the 30S ribosomal subunit. Contacts protein S5. The interaction surface between S4 and S5 is involved in control of translational fidelity.

The protein localises to the plastid. It is found in the chloroplast. Functionally, one of the primary rRNA binding proteins, it binds directly to 16S rRNA where it nucleates assembly of the body of the 30S subunit. With S5 and S12 plays an important role in translational accuracy. In Ricciocarpos natans (Liverwort), this protein is Small ribosomal subunit protein uS4c (rps4).